An 89-amino-acid chain; its full sequence is Small ribosomal subunit protein uS15 (89 aa).

Belongs to the universal ribosomal protein uS15 family. Part of the 30S ribosomal subunit. Forms a bridge to the 50S subunit in the 70S ribosome, contacting the 23S rRNA.

Functionally, one of the primary rRNA binding proteins, it binds directly to 16S rRNA where it helps nucleate assembly of the platform of the 30S subunit by binding and bridging several RNA helices of the 16S rRNA. Forms an intersubunit bridge (bridge B4) with the 23S rRNA of the 50S subunit in the ribosome. The protein is Small ribosomal subunit protein uS15 of Limosilactobacillus fermentum (strain NBRC 3956 / LMG 18251) (Lactobacillus fermentum).